The primary structure comprises 180 residues: ATP-dependent protease subunit HslV (180 aa).

Residue T5 is part of the active site. Residues G161, C164, and T167 each coordinate Na(+).

Belongs to the peptidase T1B family. HslV subfamily. In terms of assembly, a double ring-shaped homohexamer of HslV is capped on each side by a ring-shaped HslU homohexamer. The assembly of the HslU/HslV complex is dependent on binding of ATP.

It is found in the cytoplasm. The catalysed reaction is ATP-dependent cleavage of peptide bonds with broad specificity.. Its activity is regulated as follows. Allosterically activated by HslU binding. Its function is as follows. Protease subunit of a proteasome-like degradation complex believed to be a general protein degrading machinery. The sequence is that of ATP-dependent protease subunit HslV from Campylobacter lari (strain RM2100 / D67 / ATCC BAA-1060).